The sequence spans 184 residues: Antigen Sm21.7 (184 aa).

The EF-hand domain maps to 37-72 (LDMKQVNEWIALFDVDKDQKITFEEFCRGLGLKQNE). Ca(2+)-binding residues include Asp-50, Asp-52, Asp-54, Lys-56, and Glu-61.

The sequence is that of Antigen Sm21.7 (SM21.7) from Schistosoma mansoni (Blood fluke).